The primary structure comprises 66 residues: Large ribosomal subunit protein bL33c (66 aa).

Belongs to the bacterial ribosomal protein bL33 family.

It is found in the plastid. It localises to the chloroplast. The chain is Large ribosomal subunit protein bL33c from Nicotiana sylvestris (Wood tobacco).